The chain runs to 1252 residues: Protein ITPRID2 (1252 aa).

A disordered region spans residues 28-70; the sequence is CRSSWQASETEDLSTETTTQDEDEDDEEDLPGTKLPAPAGRGN. Positions 36–57 are enriched in acidic residues; it reads ETEDLSTETTTQDEDEDDEEDL. At T85 the chain carries Phosphothreonine. Phosphoserine occurs at positions 90, 109, 207, 268, and 328. Disordered regions lie at residues 306 to 483, 552 to 575, and 595 to 636; these read DKTE…HVPA, HVTP…APLQ, and FPQC…GELP. Positions 357-372 are enriched in low complexity; sequence TVTEEVSGSSSTVTDS. Basic and acidic residues-rich tracts occupy residues 395–407 and 415–428; these read SREA…DPLR and DLGH…HCEL. A compositionally biased stretch (low complexity) spans 429-441; the sequence is ESSSELKSAQASS. A Phosphoserine modification is found at S465. Phosphoserine occurs at positions 643, 667, 736, 738, 745, 758, and 766. Residue K807 forms a Glycyl lysine isopeptide (Lys-Gly) (interchain with G-Cter in SUMO2) linkage. Phosphoserine occurs at positions 866 and 898. A coiled-coil region spans residues 955 to 1031; sequence QELQVVRRSL…LLGLDEQLRA (77 aa). S1036, S1051, S1056, S1059, and S1114 each carry phosphoserine. Disordered regions lie at residues 1095 to 1131 and 1147 to 1180; these read GESS…GSKP and ALTP…ASPV. The span at 1103-1117 shows a compositional bias: low complexity; that stretch reads SQATSESSSVCSSPS. T1149 is modified (phosphothreonine). A compositionally biased stretch (polar residues) spans 1151–1161; it reads TAPSRTGSVQT. S1154 carries the post-translational modification Phosphoserine. Position 1161 is a phosphothreonine (T1161).

The protein localises to the cytoplasm. The polypeptide is Protein ITPRID2 (Itprid2) (Mus musculus (Mouse)).